The following is a 64-amino-acid chain: UPF0337 protein SH2043 (64 aa).

The interval 1 to 64 (MAEDKFEQAK…DKVKGNNDNK (64 aa)) is disordered. The span at 22–64 (DNKDLEKEGQNDKASGKAKEAVENVKNKANDLIDKVKGNNDNK) shows a compositional bias: basic and acidic residues.

The protein belongs to the UPF0337 (CsbD) family.

The chain is UPF0337 protein SH2043 from Staphylococcus haemolyticus (strain JCSC1435).